The following is a 455-amino-acid chain: Exodeoxyribonuclease 7 large subunit (455 aa).

This sequence belongs to the XseA family. As to quaternary structure, heterooligomer composed of large and small subunits.

The protein localises to the cytoplasm. The catalysed reaction is Exonucleolytic cleavage in either 5'- to 3'- or 3'- to 5'-direction to yield nucleoside 5'-phosphates.. In terms of biological role, bidirectionally degrades single-stranded DNA into large acid-insoluble oligonucleotides, which are then degraded further into small acid-soluble oligonucleotides. This chain is Exodeoxyribonuclease 7 large subunit, found in Escherichia fergusonii (strain ATCC 35469 / DSM 13698 / CCUG 18766 / IAM 14443 / JCM 21226 / LMG 7866 / NBRC 102419 / NCTC 12128 / CDC 0568-73).